The chain runs to 117 residues: Small ribosomal subunit protein uS13 (117 aa).

The disordered stretch occupies residues 94 to 117 (SLPLRGQRTKTNARTRKGPRRLIK).

Belongs to the universal ribosomal protein uS13 family. Part of the 30S ribosomal subunit. Forms a loose heterodimer with protein S19. Forms two bridges to the 50S subunit in the 70S ribosome.

In terms of biological role, located at the top of the head of the 30S subunit, it contacts several helices of the 16S rRNA. In the 70S ribosome it contacts the 23S rRNA (bridge B1a) and protein L5 of the 50S subunit (bridge B1b), connecting the 2 subunits; these bridges are implicated in subunit movement. Contacts the tRNAs in the A and P-sites. The polypeptide is Small ribosomal subunit protein uS13 (Vesicomyosocius okutanii subsp. Calyptogena okutanii (strain HA)).